The following is a 128-amino-acid chain: Aspartate 1-decarboxylase (128 aa).

The active-site Schiff-base intermediate with substrate; via pyruvic acid is Ser-25. At Ser-25 the chain carries Pyruvic acid (Ser). Thr-57 is a substrate binding site. Tyr-58 acts as the Proton donor in catalysis. Residue 73-75 participates in substrate binding; it reads GSA.

The protein belongs to the PanD family. As to quaternary structure, heterooctamer of four alpha and four beta subunits. The cofactor is pyruvate. In terms of processing, is synthesized initially as an inactive proenzyme, which is activated by self-cleavage at a specific serine bond to produce a beta-subunit with a hydroxyl group at its C-terminus and an alpha-subunit with a pyruvoyl group at its N-terminus.

The protein resides in the cytoplasm. It catalyses the reaction L-aspartate + H(+) = beta-alanine + CO2. It functions in the pathway cofactor biosynthesis; (R)-pantothenate biosynthesis; beta-alanine from L-aspartate: step 1/1. Its function is as follows. Catalyzes the pyruvoyl-dependent decarboxylation of aspartate to produce beta-alanine. The protein is Aspartate 1-decarboxylase of Paraburkholderia phytofirmans (strain DSM 17436 / LMG 22146 / PsJN) (Burkholderia phytofirmans).